A 458-amino-acid polypeptide reads, in one-letter code: Protochlorophyllide reductase, chloroplastic (458 aa).

It belongs to the short-chain dehydrogenases/reductases (SDR) family. POR subfamily.

The protein localises to the plastid. The protein resides in the chloroplast. It carries out the reaction chlorophyllide a + NADP(+) = protochlorophyllide a + NADPH + H(+). It functions in the pathway porphyrin-containing compound metabolism; chlorophyll biosynthesis. Phototransformation of protochlorophyllide (Pchlide) to chlorophyllide (Chlide). The polypeptide is Protochlorophyllide reductase, chloroplastic (PORA) (Marchantia paleacea (Liverwort)).